The chain runs to 179 residues: Small heat shock protein hspK (179 aa).

A sHSP domain is found at 32-178 (HRINIWRPTV…DRLKIPIQSK (147 aa)). The tract at residues 80-122 (KKSKGGLNNLPSSSSSINSDSTTNTNTNTTTTTTTAPPPPSDA) is disordered. Over residues 87-114 (NNLPSSSSSINSDSTTNTNTNTTTTTTT) the composition is skewed to low complexity.

This sequence belongs to the small heat shock protein (HSP20) family.

The protein is Small heat shock protein hspK (hspK) of Dictyostelium discoideum (Social amoeba).